We begin with the raw amino-acid sequence, 65 residues long: uncharacterized protein (65 aa).

This is an uncharacterized protein from Bacillus subtilis (strain 168).